The following is a 215-amino-acid chain: Variable small protein 6 (215 aa).

Positions 1 to 18 (MRKRISAIIMTLFMVFMS) are cleaved as a signal peptide. The N-palmitoyl cysteine moiety is linked to residue C19. C19 carries S-diacylglycerol cysteine lipidation.

This sequence belongs to the variable small protein (Vsp) family.

It localises to the cell outer membrane. In terms of biological role, the Vlp and Vsp proteins are antigenically distinct proteins, only one vlp or vsp gene is transcriptionally active at any one time. Switching between these genes is a mechanism of host immune response evasion. This is Variable small protein 6 from Borrelia hermsii.